Here is a 432-residue protein sequence, read N- to C-terminus: Ribosome biogenesis protein WDR12 homolog (432 aa).

Residues 13-97 (LQIRLVALNK…ESVIEVVYFQ (85 aa)) form a ubiquitin-like (UBL) domain region. WD repeat units follow at residues 109-146 (LHSDWIKSVRSKDDCILAGSLDGTARIWNMAGEEYAIF), 148-190 (GHES…KSVE), 197-236 (GHTQAVNAVTVNQSKTKICSVSSDKMIKIWSTDCSRKDDD), 265-303 (GHTDGIDAVVWPKEAEIITAGWDHRIKIWDTEVGVNKSD), 305-345 (NVNK…DQTV), 352-392 (SHKN…APLY), and 396-432 (GHEDKVLAVDWSEPQYIVSGGADNRIQIYQREVAQRS).

It belongs to the WD repeat WDR12/YTM1 family.

It is found in the nucleus. Its subcellular location is the nucleolus. The protein resides in the nucleoplasm. Its function is as follows. Required for maturation of ribosomal RNAs and formation of the large ribosomal subunit. The protein is Ribosome biogenesis protein WDR12 homolog of Trichoplax adhaerens (Trichoplax reptans).